Reading from the N-terminus, the 586-residue chain is 2-succinyl-5-enolpyruvyl-6-hydroxy-3-cyclohexene-1-carboxylate synthase (586 aa).

The protein belongs to the TPP enzyme family. MenD subfamily. In terms of assembly, homodimer. The cofactor is Mg(2+). Mn(2+) is required as a cofactor. Thiamine diphosphate serves as cofactor.

The enzyme catalyses isochorismate + 2-oxoglutarate + H(+) = 5-enolpyruvoyl-6-hydroxy-2-succinyl-cyclohex-3-ene-1-carboxylate + CO2. Its pathway is quinol/quinone metabolism; 1,4-dihydroxy-2-naphthoate biosynthesis; 1,4-dihydroxy-2-naphthoate from chorismate: step 2/7. It participates in quinol/quinone metabolism; menaquinone biosynthesis. In terms of biological role, catalyzes the thiamine diphosphate-dependent decarboxylation of 2-oxoglutarate and the subsequent addition of the resulting succinic semialdehyde-thiamine pyrophosphate anion to isochorismate to yield 2-succinyl-5-enolpyruvyl-6-hydroxy-3-cyclohexene-1-carboxylate (SEPHCHC). This is 2-succinyl-5-enolpyruvyl-6-hydroxy-3-cyclohexene-1-carboxylate synthase from Geobacillus thermodenitrificans (strain NG80-2).